Reading from the N-terminus, the 397-residue chain is Succinate--CoA ligase [ADP-forming] subunit beta (397 aa).

Residues 9–254 (KALLKGYGAP…ETEEDAKEIE (246 aa)) enclose the ATP-grasp domain. Residues K46, 53-55 (GRG), E109, A112, and E117 contribute to the ATP site. Residues N209 and D223 each coordinate Mg(2+). Residues N274 and 331–333 (GIM) contribute to the substrate site.

Belongs to the succinate/malate CoA ligase beta subunit family. As to quaternary structure, heterotetramer of two alpha and two beta subunits. Requires Mg(2+) as cofactor.

It catalyses the reaction succinate + ATP + CoA = succinyl-CoA + ADP + phosphate. The enzyme catalyses GTP + succinate + CoA = succinyl-CoA + GDP + phosphate. It functions in the pathway carbohydrate metabolism; tricarboxylic acid cycle; succinate from succinyl-CoA (ligase route): step 1/1. Its function is as follows. Succinyl-CoA synthetase functions in the citric acid cycle (TCA), coupling the hydrolysis of succinyl-CoA to the synthesis of either ATP or GTP and thus represents the only step of substrate-level phosphorylation in the TCA. The beta subunit provides nucleotide specificity of the enzyme and binds the substrate succinate, while the binding sites for coenzyme A and phosphate are found in the alpha subunit. This Agrobacterium fabrum (strain C58 / ATCC 33970) (Agrobacterium tumefaciens (strain C58)) protein is Succinate--CoA ligase [ADP-forming] subunit beta.